The chain runs to 426 residues: Enolase (426 aa).

Q165 contributes to the (2R)-2-phosphoglycerate binding site. The active-site Proton donor is E209. Mg(2+) is bound by residues D244, E287, and D313. 4 residues coordinate (2R)-2-phosphoglycerate: K338, R367, S368, and K389. K338 (proton acceptor) is an active-site residue.

It belongs to the enolase family. Mg(2+) serves as cofactor.

The protein localises to the cytoplasm. Its subcellular location is the secreted. The protein resides in the cell surface. The catalysed reaction is (2R)-2-phosphoglycerate = phosphoenolpyruvate + H2O. It functions in the pathway carbohydrate degradation; glycolysis; pyruvate from D-glyceraldehyde 3-phosphate: step 4/5. Functionally, catalyzes the reversible conversion of 2-phosphoglycerate (2-PG) into phosphoenolpyruvate (PEP). It is essential for the degradation of carbohydrates via glycolysis. This chain is Enolase, found in Methanococcus maripaludis (strain C7 / ATCC BAA-1331).